A 263-amino-acid polypeptide reads, in one-letter code: uncharacterized protein (263 aa).

A signal peptide spans Met1–Gly22. The N-palmitoyl cysteine moiety is linked to residue Cys23. Cys23 carries S-diacylglycerol cysteine lipidation.

It belongs to the staphylococcal tandem lipoprotein family.

The protein localises to the cell membrane. This is an uncharacterized protein from Staphylococcus aureus (strain COL).